Reading from the N-terminus, the 180-residue chain is Protein C2-DOMAIN ABA-RELATED 10 (180 aa).

Residues Met-1–Leu-105 enclose the C2 domain. 7 residues coordinate Ca(2+): Arg-22, Asp-23, Asp-28, Asp-74, Trp-75, Asp-76, and Asp-82.

This sequence belongs to the plant CAR protein family. Binds to PYR/PYL/RCAR abscisic acid intracellular receptors in an ABA-independent manner, both at the plasma membrane and in the nucleus.

Its subcellular location is the cell membrane. It localises to the nucleus. Its function is as follows. Stimulates the GTPase/ATPase activities of Obg-like ATPases. Mediates the transient calcium-dependent interaction of PYR/PYL/RCAR abscisic acid (ABA) receptors with the plasma membrane and thus regulates ABA sensitivity. The polypeptide is Protein C2-DOMAIN ABA-RELATED 10 (Arabidopsis thaliana (Mouse-ear cress)).